The following is a 315-amino-acid chain: Transcription repressor OFP7 (315 aa).

The interval 113-183 is disordered; sequence YETPRRKIYN…ELPRVTRRPR (71 aa). Over residues 130–145 the composition is skewed to basic residues; it reads RRRLKKKEKSNSRRRG. The span at 160-174 shows a compositional bias: polar residues; it reads LPSSTNLSPEYSSSE. The OVATE domain maps to 230 to 289; it reads VVKKSEDPYEDFKGSMMEMIVEKKMFEVAELEQLLSCFLSLNAKRHHRAIVRAFSEIWVA.

As to expression, expressed in roots, shoots, stems, flower buds and siliques.

It is found in the nucleus. In terms of biological role, transcriptional repressor that regulates multiple aspects of plant growth and development through the regulation of BEL1-LIKE (BLH) and KNOX TALE (KNAT) homeodomain transcription factors. This Arabidopsis thaliana (Mouse-ear cress) protein is Transcription repressor OFP7 (OFP7).